The sequence spans 452 residues: Keratin, type I cytoskeletal 15 (452 aa).

The segment at 1-97 is head; the sequence is MATTFLQTSS…GGDGGLLSGN (97 aa). Phosphoserine is present on residues Ser-15, Ser-16, Ser-28, Ser-33, and Ser-47. The coil 1A stretch occupies residues 98-133; the sequence is EKVTMQNLNDRLASYLDKVRALEQANTELEVKIRDW. An IF rod domain is found at 98-410; it reads EKVTMQNLND…NLLEGQDAKM (313 aa). Thr-124 is modified (phosphothreonine). Positions 134 to 152 are linker 1; sequence YQKQSPASPDRDYSHYFKT. Residues 153–244 form a coil 1B region; the sequence is MEEIRDKILA…KNHEEEMKEF (92 aa). The interval 245 to 264 is linker 12; that stretch reads SSQLAGQVNVEMDAAPGVDL. Residues 265 to 406 form a coil 2 region; the sequence is TRMLAEMREQ…ATYRNLLEGQ (142 aa). Residue Lys-293 forms a Glycyl lysine isopeptide (Lys-Gly) (interchain with G-Cter in SUMO2) linkage. Thr-294 and Thr-316 each carry phosphothreonine. A tail region spans residues 407-452; sequence DAKMAGIGVREGSSGGGGSSSSSSNFHISVEESVDGKVVSSRKREI. The disordered stretch occupies residues 413-452; the sequence is IGVREGSSGGGGSSSSSSNFHISVEESVDGKVVSSRKREI. Lys-443 is covalently cross-linked (Glycyl lysine isopeptide (Lys-Gly) (interchain with G-Cter in SUMO1); alternate). Lys-443 participates in a covalent cross-link: Glycyl lysine isopeptide (Lys-Gly) (interchain with G-Cter in SUMO2); alternate.

This sequence belongs to the intermediate filament family. Heterotetramer of two type I and two type II keratins. Forms a heterodimer with KRT14. Interacts with PLEC isoform 1C, when in a heterodimer with KRT14. Interacts with NOD2. In terms of tissue distribution, expressed strongly in the basal cell layer at the tips of rete-like prominences (RLPs) of adult dorsal tongue, outer root sheath (ORS) of hair follicle and skin epidermis (at protein level).

Its function is as follows. In the absence of KRT14, makes a bona fide, but ultrastructurally distinct keratin filament network with KRT5. The protein is Keratin, type I cytoskeletal 15 (Krt15) of Mus musculus (Mouse).